A 755-amino-acid chain; its full sequence is Proprotein convertase subtilisin/kexin type 4 (755 aa).

A signal peptide spans 1–25; sequence MRPAPIALWLRLVLALALVRPRAVG. The propeptide occupies 26 to 113; that stretch reads WAPVRAPIYV…QQTLQRRVKR (88 aa). A Peptidase S8 domain is found at 126–440; it reads QWYMNSEAQP…YGLLDAGLLV (315 aa). Active-site charge relay system residues include Asp158, His199, and Ser373. The P/Homo B domain maps to 449-581; sequence TQPQRKCAVR…TLLLYGTAED (133 aa). Residues Asn475 and Asn629 are each glycosylated (N-linked (GlcNAc...) asparagine). Residues 709 to 729 traverse the membrane as a helical segment; it reads AMVLSLLAVTLGGPVLCGMSM.

It belongs to the peptidase S8 family. Furin subfamily. The proPCSK4 form interacts with HSPA5; the interaction takes place at the endoplasmic reticulum. In terms of processing, N-glycosylated. Post-translationally, synthesized in the endoplasmic reticulum as a zymogen, is matured by autocatalytic cleavage between the prodomain and the catalytic domain. In terms of tissue distribution, placenta.

It localises to the membrane. The protein localises to the cytoplasmic vesicle. It is found in the secretory vesicle. The protein resides in the acrosome membrane. In terms of biological role, proprotein convertase involved in the processing of hormone and other protein precursors at sites comprised of pairs of basic amino acid residues. In males, important for ADAM2 processing as well as other acrosomal proteins with roles in fertilization and critical for normal fertilization events such as sperm capacitation, acrosome reaction and binding of sperm to zona pellucida. Also plays a role in female fertility, involved in the regulation of trophoblast migration and placental development, may be through the proteolytical processing and activation of proteins such as IGF2. May also participate in folliculogenesis in the ovaries. In Homo sapiens (Human), this protein is Proprotein convertase subtilisin/kexin type 4.